Consider the following 76-residue polypeptide: Omega-conotoxin-like TxO5 (76 aa).

The first 22 residues, 1-22 (MKLTCMMIVAVLFLTAWTFVTA), serve as a signal peptide directing secretion. The propeptide occupies 23–48 (ITSNGLENLFPKAHHEMKNPEASKLN). Cystine bridges form between C51–C66, C58–C70, and C65–C75.

Belongs to the conotoxin O1 superfamily. As to expression, expressed by the venom duct.

It localises to the secreted. Functionally, omega-conotoxins act at presynaptic membranes, they bind and block voltage-gated calcium channels (Cav). The sequence is that of Omega-conotoxin-like TxO5 from Conus textile (Cloth-of-gold cone).